We begin with the raw amino-acid sequence, 245 residues long: 8-amino-3,8-dideoxy-manno-octulosonate cytidylyltransferase (245 aa).

Belongs to the KdsB family.

It is found in the cytoplasm. It carries out the reaction 8-amino-3,8-dideoxy-alpha-D-manno-octulosonate + CTP = CMP-8-amino-3,8-dideoxy-alpha-D-manno-oct-2-ulosonate + diphosphate. The protein operates within bacterial outer membrane biogenesis; lipopolysaccharide biosynthesis. Activates KDO8N (a required 8-carbon sugar) for incorporation into bacterial lipopolysaccharide in the Shewanella genus. This chain is 8-amino-3,8-dideoxy-manno-octulosonate cytidylyltransferase, found in Shewanella piezotolerans (strain WP3 / JCM 13877).